A 222-amino-acid chain; its full sequence is Protein-L-isoaspartate O-methyltransferase (222 aa).

S72 is a catalytic residue.

This sequence belongs to the methyltransferase superfamily. L-isoaspartyl/D-aspartyl protein methyltransferase family.

The protein localises to the cytoplasm. It carries out the reaction [protein]-L-isoaspartate + S-adenosyl-L-methionine = [protein]-L-isoaspartate alpha-methyl ester + S-adenosyl-L-homocysteine. Functionally, catalyzes the methyl esterification of L-isoaspartyl residues in peptides and proteins that result from spontaneous decomposition of normal L-aspartyl and L-asparaginyl residues. It plays a role in the repair and/or degradation of damaged proteins. The sequence is that of Protein-L-isoaspartate O-methyltransferase from Picosynechococcus sp. (strain ATCC 27264 / PCC 7002 / PR-6) (Agmenellum quadruplicatum).